Consider the following 208-residue polypeptide: MVNKRIETLLAQLRQQGIQDERLLKAIEAVPRERFVDEAFEHKAYENTALPIGSGQTISQPYMVAKMTELLSLTPVSRVLEIGTGSGYQTAILAHLVQHVCSVERIKGLQWQAKRRLKQLDLHNVSTRHGDGWQGWASRGPFDAIIVTAAPPEIPRALLEQLDEGGVMVLPVGEQSQILQVVQRHAGEFIIQTVEAVRFVPLVKGELA.

The active site involves S59.

It belongs to the methyltransferase superfamily. L-isoaspartyl/D-aspartyl protein methyltransferase family.

Its subcellular location is the cytoplasm. It carries out the reaction [protein]-L-isoaspartate + S-adenosyl-L-methionine = [protein]-L-isoaspartate alpha-methyl ester + S-adenosyl-L-homocysteine. In terms of biological role, catalyzes the methyl esterification of L-isoaspartyl residues in peptides and proteins that result from spontaneous decomposition of normal L-aspartyl and L-asparaginyl residues. It plays a role in the repair and/or degradation of damaged proteins. This chain is Protein-L-isoaspartate O-methyltransferase, found in Pectobacterium carotovorum subsp. carotovorum (strain PC1).